The primary structure comprises 407 residues: GTPase Obg (407 aa).

Positions 1–159 (MKFVDEVSIR…RDLKLEMKVL (159 aa)) constitute an Obg domain. Residues 128–148 (TRFKSSTNRAPRQTTPGKPGE) form a disordered region. Residues 129 to 143 (RFKSSTNRAPRQTTP) are compositionally biased toward polar residues. One can recognise an OBG-type G domain in the interval 160 to 333 (ADVGLLGLPN…LTRDIMRYLE (174 aa)). GTP is bound by residues 166-173 (GLPNAGKS), 191-195 (FTTLV), 213-216 (DIPG), 283-286 (NKCD), and 314-316 (SAI). Residues serine 173 and threonine 193 each coordinate Mg(2+). The interval 376–407 (SGVKSVHDIGDDDWDEEDVDDEDGPEIIYVRD) is disordered. Residues 385 to 400 (GDDDWDEEDVDDEDGP) show a composition bias toward acidic residues.

Belongs to the TRAFAC class OBG-HflX-like GTPase superfamily. OBG GTPase family. As to quaternary structure, monomer. The cofactor is Mg(2+).

The protein localises to the cytoplasm. Its function is as follows. An essential GTPase which binds GTP, GDP and possibly (p)ppGpp with moderate affinity, with high nucleotide exchange rates and a fairly low GTP hydrolysis rate. Plays a role in control of the cell cycle, stress response, ribosome biogenesis and in those bacteria that undergo differentiation, in morphogenesis control. The sequence is that of GTPase Obg from Pseudomonas fluorescens (strain Pf0-1).